A 1357-amino-acid polypeptide reads, in one-letter code: Kinectin (1357 aa).

Residues 1-6 (MEFYES) lie on the Cytoplasmic side of the membrane. Residues 7–29 (AYFIVLIPSIVITVIFLFFWLFM) traverse the membrane as a helical; Signal-anchor for type II membrane protein segment. At 30–1357 (KETLYDEVLA…KEKEHYQVLE (1328 aa)) the chain is on the lumenal side. 2 disordered regions span residues 48-81 (IPTK…ESVP) and 103-218 (NVVE…KQKT). Serine 75 carries the phosphoserine; by FAM20C modification. The residue at position 77 (serine 77) is a Phosphoserine. A compositionally biased stretch (basic and acidic residues) spans 121–135 (QKPVLEEQVIKESDA). The residue at position 153 (threonine 153) is a Phosphothreonine. Phosphoserine is present on serine 156. A compositionally biased stretch (basic residues) spans 161-171 (SKKKPGQKKSK). Asparagine 172, asparagine 435, asparagine 772, asparagine 904, and asparagine 1055 each carry an N-linked (GlcNAc...) asparagine glycan. Positions 172 to 182 (NGSDDQDKKVE) are enriched in basic and acidic residues. Residues 330–1356 (LIHQLQEKDK…TKEKEHYQVL (1027 aa)) adopt a coiled-coil conformation. Serine 1084 carries the post-translational modification Phosphoserine. Asparagine 1088 and asparagine 1263 each carry an N-linked (GlcNAc...) asparagine glycan. Serine 1313 carries the phosphoserine modification. A glycan (N-linked (GlcNAc...) asparagine) is linked at asparagine 1329.

It belongs to the kinectin family. As to quaternary structure, parallel homodimers formed between the membrane-bound and the cytosolic form, and also between 2 cytosolic forms. High levels in peripheral blood lymphocytes, testis and ovary, lower levels in spleen, thymus, prostate, small intestine and colon.

The protein resides in the endoplasmic reticulum membrane. Its function is as follows. Receptor for kinesin thus involved in kinesin-driven vesicle motility. Accumulates in integrin-based adhesion complexes (IAC) upon integrin aggregation by fibronectin. The polypeptide is Kinectin (KTN1) (Homo sapiens (Human)).